The chain runs to 312 residues: Malate dehydrogenase (312 aa).

NAD(+) is bound by residues 7–13 (GAAGGIG) and Asp-34. Positions 81 and 87 each coordinate substrate. NAD(+) is bound by residues Asn-94 and 117–119 (ITN). Residues Asn-119 and Arg-153 each contribute to the substrate site. The active-site Proton acceptor is His-177. Met-227 lines the NAD(+) pocket.

Belongs to the LDH/MDH superfamily. MDH type 1 family. As to quaternary structure, homodimer.

The catalysed reaction is (S)-malate + NAD(+) = oxaloacetate + NADH + H(+). Its function is as follows. Catalyzes the reversible oxidation of malate to oxaloacetate. The sequence is that of Malate dehydrogenase from Salmonella arizonae (strain ATCC BAA-731 / CDC346-86 / RSK2980).